The following is an 890-amino-acid chain: Alanine--tRNA ligase (890 aa).

Residues histidine 567, histidine 571, cysteine 680, and histidine 684 each contribute to the Zn(2+) site.

It belongs to the class-II aminoacyl-tRNA synthetase family. It depends on Zn(2+) as a cofactor.

It is found in the cytoplasm. The catalysed reaction is tRNA(Ala) + L-alanine + ATP = L-alanyl-tRNA(Ala) + AMP + diphosphate. Functionally, catalyzes the attachment of alanine to tRNA(Ala) in a two-step reaction: alanine is first activated by ATP to form Ala-AMP and then transferred to the acceptor end of tRNA(Ala). Also edits incorrectly charged Ser-tRNA(Ala) and Gly-tRNA(Ala) via its editing domain. The polypeptide is Alanine--tRNA ligase (Ruegeria pomeroyi (strain ATCC 700808 / DSM 15171 / DSS-3) (Silicibacter pomeroyi)).